Reading from the N-terminus, the 506-residue chain is Probable alpha-L-arabinofuranosidase B (506 aa).

A signal peptide spans 1–26 (MLPQLSIERASVFALGLIATGSLVVA). Residues 27–343 (GPCDIYSAGG…ANIVAAKYAT (317 aa)) form a catalytic region. Intrachain disulfides connect cysteine 29-cysteine 39, cysteine 89-cysteine 94, and cysteine 184-cysteine 185. Residue aspartate 227 participates in substrate binding. Glutamate 229 (nucleophile) is an active-site residue. Asparagine 230 lines the substrate pocket. An N-linked (GlcNAc...) asparagine glycan is attached at asparagine 240. A substrate-binding site is contributed by glycine 304. The active-site Proton donor is the aspartate 305. The segment at 344–506 (ASLTSGPKLT…VSWVISTGFA (163 aa)) is ABD. Cysteine 409 and cysteine 447 are disulfide-bonded. Residues histidine 424, asparagine 426, phenylalanine 427, aspartate 443, histidine 471, leucine 476, and aspartate 496 each coordinate substrate.

This sequence belongs to the glycosyl hydrolase 54 family.

Its subcellular location is the secreted. The catalysed reaction is Hydrolysis of terminal non-reducing alpha-L-arabinofuranoside residues in alpha-L-arabinosides.. The protein operates within glycan metabolism; L-arabinan degradation. Its function is as follows. Alpha-L-arabinofuranosidase involved in the degradation of arabinoxylan, a major component of plant hemicellulose. Able to hydrolyze 1,5-, 1,3- and 1,2-alpha-linkages not only in L-arabinofuranosyl oligosaccharides, but also in polysaccharides containing terminal non-reducing L-arabinofuranoses in side chains, like L-arabinan, arabinogalactan and arabinoxylan. In Aspergillus fumigatus (strain ATCC MYA-4609 / CBS 101355 / FGSC A1100 / Af293) (Neosartorya fumigata), this protein is Probable alpha-L-arabinofuranosidase B (abfB).